The following is a 459-amino-acid chain: Putrescine aminotransferase (459 aa).

Pyridoxal 5'-phosphate contacts are provided by residues 150-151 (GT) and Gln-274. At Lys-300 the chain carries N6-(pyridoxal phosphate)lysine. Thr-332 serves as a coordination point for pyridoxal 5'-phosphate.

Belongs to the class-III pyridoxal-phosphate-dependent aminotransferase family. Putrescine aminotransferase subfamily. Requires pyridoxal 5'-phosphate as cofactor.

It catalyses the reaction an alkane-alpha,omega-diamine + 2-oxoglutarate = an omega-aminoaldehyde + L-glutamate. The catalysed reaction is putrescine + 2-oxoglutarate = 1-pyrroline + L-glutamate + H2O. The enzyme catalyses cadaverine + 2-oxoglutarate = 5-aminopentanal + L-glutamate. The protein operates within amine and polyamine degradation; putrescine degradation; 4-aminobutanal from putrescine (transaminase route): step 1/1. Functionally, catalyzes the aminotransferase reaction from putrescine to 2-oxoglutarate, leading to glutamate and 4-aminobutanal, which spontaneously cyclizes to form 1-pyrroline. This is the first step in one of two pathways for putrescine degradation, where putrescine is converted into 4-aminobutanoate (gamma-aminobutyrate or GABA) via 4-aminobutanal. Also functions as a cadaverine transaminase in a a L-lysine degradation pathway to succinate that proceeds via cadaverine, glutarate and L-2-hydroxyglutarate. This is Putrescine aminotransferase from Enterobacter sp. (strain 638).